Here is a 902-residue protein sequence, read N- to C-terminus: Cytosolic 10-formyltetrahydrofolate dehydrogenase (902 aa).

The segment at 1–310 (MKIAVIGQSL…PASQYFKTAD (310 aa)) is hydrolase domain. 88 to 90 (QFI) is a (6R)-10-formyltetrahydrofolate binding site. The Proton donor role is filled by histidine 106. A (6R)-10-formyltetrahydrofolate-binding site is contributed by aspartate 142. Residues 318-395 (EEEQKVSEEI…EFIQMVVRRM (78 aa)) enclose the Carrier domain. Position 354 is an O-(pantetheine 4'-phosphoryl)serine (serine 354). An aldehyde dehydrogenase domain region spans residues 417 to 902 (TVKIPHQLFI…LKTKAVTIEY (486 aa)). NADP(+) is bound by residues 571 to 573 (IPW), 597 to 600 (KPAQ), 630 to 635 (GSLIGQ), 650 to 651 (GS), and 673 to 674 (EL). Residue glutamate 673 is the Proton acceptor of the active site. Cysteine 707 acts as the Proton donor in catalysis. NADP(+) is bound by residues lysine 757 and 804-806 (ESF).

This sequence in the N-terminal section; belongs to the GART family. In the C-terminal section; belongs to the aldehyde dehydrogenase family. ALDH1L subfamily. Homotetramer. Post-translationally, phosphopantetheinylation at Ser-354 by AASDHPPT is required for the formyltetrahydrofolate dehydrogenase activity.

The protein localises to the cytoplasm. It localises to the cytosol. It carries out the reaction (6R)-10-formyltetrahydrofolate + NADP(+) + H2O = (6S)-5,6,7,8-tetrahydrofolate + CO2 + NADPH + H(+). Cytosolic 10-formyltetrahydrofolate dehydrogenase that catalyzes the NADP(+)-dependent conversion of 10-formyltetrahydrofolate to tetrahydrofolate and carbon dioxide. May also have an NADP(+)-dependent aldehyde dehydrogenase activity towards formaldehyde, acetaldehyde, propionaldehyde, and benzaldehyde. This Xenopus laevis (African clawed frog) protein is Cytosolic 10-formyltetrahydrofolate dehydrogenase (aldh1l1).